We begin with the raw amino-acid sequence, 126 residues long: Large ribosomal subunit protein bL12 (126 aa).

The protein belongs to the bacterial ribosomal protein bL12 family. In terms of assembly, homodimer. Part of the ribosomal stalk of the 50S ribosomal subunit. Forms a multimeric L10(L12)X complex, where L10 forms an elongated spine to which 2 to 4 L12 dimers bind in a sequential fashion. Binds GTP-bound translation factors.

In terms of biological role, forms part of the ribosomal stalk which helps the ribosome interact with GTP-bound translation factors. Is thus essential for accurate translation. The protein is Large ribosomal subunit protein bL12 of Rhizobium meliloti (strain 1021) (Ensifer meliloti).